Consider the following 662-residue polypeptide: MKKTLTTIRRSSIARRLIISFLLILIVPITALSVSAYQSAVASLDVQMTQSAKENVQILDHIIDDKISTTEKSLAYFSDWATAEKFQDKKKTELKQEFKQFIQMNDNVAAVFSSGKDGDFTRYPYADMPSDFNALERDWYKEAMANKGKTIVTEPYESISSGKMVVTIARQTVDGSGVVAIDMKIDDLVTTAKGINIGKEGYAFILSQNKKVIAYSGEKAGTELKGDWVDKLYKDKSGDFEYTYKGKKKKMAFATSQTTGWKISGTMYANEIHDAASRVLIMASIVLAIAIGAGMTAIYFVIRSITKPLRRIVASAEKISEGDLTETIEINSKDELGVLSESFNHMAHSLRSLIHGIKDSVEHVASSSEELTASADQTSRATEHITMAIEQFSNGSESQSEKIETTTEQINEMNDGLAELARAAAVITETSADSTEVSSKGETLVQKTAGQMNTIDHSVKAAEQVVKGLEIKSKDITNILRVINGIADQTNLLALNAAIEAARAGEYGRGFSVVAEEVRKLAVQSADSAKEIESLISEIVKEIHTSLNVLQSVNKEVETGLVMTDETKQSFKHISQMTNQIASELQNMNATVEELSAGAQEISAASNDITAISKESSDGIQDIAASAEEQLASMEEISSSALTLERMSEELRDLTKQFKVDK.

Over 1-16 (MKKTLTTIRRSSIARR) the chain is Cytoplasmic. A helical membrane pass occupies residues 17–37 (LIISFLLILIVPITALSVSAY). Over 38-281 (QSAVASLDVQ…IHDAASRVLI (244 aa)) the chain is Extracellular. One can recognise a Cache domain in the interval 152-228 (VTEPYESISS…KAGTELKGDW (77 aa)). The helical transmembrane segment at 282 to 302 (MASIVLAIAIGAGMTAIYFVI) threads the bilayer. Residues 303–355 (RSITKPLRRIVASAEKISEGDLTETIEINSKDELGVLSESFNHMAHSLRSLIH) enclose the HAMP domain. At 303–662 (RSITKPLRRI…DLTKQFKVDK (360 aa)) the chain is on the cytoplasmic side. Residues glutamate 370, glutamate 594, glutamate 629, and glutamate 636 each carry the glutamate methyl ester (Glu) modification. A Methyl-accepting transducer domain is found at 374-610 (SADQTSRATE…EISAASNDIT (237 aa)).

This sequence belongs to the methyl-accepting chemotaxis (MCP) protein family. In terms of assembly, interacts with YabA.

The protein resides in the cell membrane. Its function is as follows. Chemotactic-signal transducers respond to changes in the concentration of attractants and repellents in the environment, transduce a signal from the outside to the inside of the cell, and facilitate sensory adaptation through the variation of the level of methylation. All amino acids serve as attractants in B.subtilis, they appear to cause an increase in the turnover methyl groups, leading to methylation of an unidentified acceptor, while repellents have been shown to cause a decrease in methyl group turnover. The methyl groups are added by a methyltransferase and removed by a methylesterase. This chain is Methyl-accepting chemotaxis protein TlpA, found in Bacillus subtilis (strain 168).